The following is a 743-amino-acid chain: Phosphoribosylformylglycinamidine synthase subunit PurL (743 aa).

The active site involves H50. Residues Y53 and K92 each coordinate ATP. E94 is a Mg(2+) binding site. Residues 95–98 and R117 each bind substrate; that span reads SHNH. H96 serves as the catalytic Proton acceptor. D118 contributes to the Mg(2+) binding site. Q241 is a binding site for substrate. Residue D269 participates in Mg(2+) binding. 313–315 is a binding site for substrate; that stretch reads ESQ. D494 and G531 together coordinate ATP. N532 provides a ligand contact to Mg(2+). S534 contacts substrate.

The protein belongs to the FGAMS family. As to quaternary structure, monomer. Part of the FGAM synthase complex composed of 1 PurL, 1 PurQ and 2 PurS subunits.

Its subcellular location is the cytoplasm. The catalysed reaction is N(2)-formyl-N(1)-(5-phospho-beta-D-ribosyl)glycinamide + L-glutamine + ATP + H2O = 2-formamido-N(1)-(5-O-phospho-beta-D-ribosyl)acetamidine + L-glutamate + ADP + phosphate + H(+). It functions in the pathway purine metabolism; IMP biosynthesis via de novo pathway; 5-amino-1-(5-phospho-D-ribosyl)imidazole from N(2)-formyl-N(1)-(5-phospho-D-ribosyl)glycinamide: step 1/2. Functionally, part of the phosphoribosylformylglycinamidine synthase complex involved in the purines biosynthetic pathway. Catalyzes the ATP-dependent conversion of formylglycinamide ribonucleotide (FGAR) and glutamine to yield formylglycinamidine ribonucleotide (FGAM) and glutamate. The FGAM synthase complex is composed of three subunits. PurQ produces an ammonia molecule by converting glutamine to glutamate. PurL transfers the ammonia molecule to FGAR to form FGAM in an ATP-dependent manner. PurS interacts with PurQ and PurL and is thought to assist in the transfer of the ammonia molecule from PurQ to PurL. The sequence is that of Phosphoribosylformylglycinamidine synthase subunit PurL from Mesorhizobium japonicum (strain LMG 29417 / CECT 9101 / MAFF 303099) (Mesorhizobium loti (strain MAFF 303099)).